The following is a 464-amino-acid chain: Probable mannosyltransferase KTR4 (464 aa).

The Cytoplasmic portion of the chain corresponds to 1–11 (MRFLSKRILKP). A helical; Signal-anchor for type II membrane protein transmembrane segment spans residues 12–32 (VLSVIILISIAVTVVLYFLTA). A stem region region spans residues 33-130 (NENYLQAVKD…NLVRSGDPLA (98 aa)). Residues 33 to 464 (NENYLQAVKD…SMSEEELEMY (432 aa)) are Lumenal-facing. Residues 131–464 (GKAKGTILSL…SMSEEELEMY (334 aa)) are catalytic. Glutamate 352 serves as the catalytic Nucleophile.

The protein belongs to the glycosyltransferase 15 family.

It localises to the membrane. In terms of biological role, possible glycosyltransferase that transfers an alpha-D-mannosyl residue from GDP-mannose into lipid-linked oligosaccharide, forming an alpha-(1-&gt;2)-D-mannosyl-D-mannose linkage. This is Probable mannosyltransferase KTR4 (KTR4) from Saccharomyces cerevisiae (strain ATCC 204508 / S288c) (Baker's yeast).